A 263-amino-acid polypeptide reads, in one-letter code: Small ribosomal subunit protein eS1 (263 aa).

The span at 236–254 (GDGKGGSDEPGARVDRPEG) shows a compositional bias: basic and acidic residues. Positions 236-263 (GDGKGGSDEPGARVDRPEGYEPPVQETV) are disordered.

This sequence belongs to the eukaryotic ribosomal protein eS1 family. Component of the small ribosomal subunit. Mature ribosomes consist of a small (40S) and a large (60S) subunit. The 40S subunit contains about 33 different proteins and 1 molecule of RNA (18S). The 60S subunit contains about 49 different proteins and 3 molecules of RNA (28S, 5.8S and 5S).

It is found in the cytoplasm. This Periplaneta americana (American cockroach) protein is Small ribosomal subunit protein eS1.